A 373-amino-acid chain; its full sequence is Putative ribosome biogenesis protein C8F11.04 (373 aa).

A disordered region spans residues 265–373; the sequence is RKVVTKETAS…VKAGKNKVKH (109 aa). Over residues 292–320 the composition is skewed to basic and acidic residues; that stretch reads KVEVAKESKDSKQQNVSDKKQVTVKEVPK. Polar residues predominate over residues 347-359; sequence KVSQSSLKANGTT. Residues 362 to 373 are compositionally biased toward basic residues; that stretch reads KKVKAGKNKVKH.

Belongs to the universal ribosomal protein uL1 family. Highly divergent. In terms of assembly, component of the 90S pre-ribosomes.

It localises to the nucleus. The protein resides in the nucleolus. Functionally, involved in rRNA-processing and ribosome biosynthesis. This Schizosaccharomyces pombe (strain 972 / ATCC 24843) (Fission yeast) protein is Putative ribosome biogenesis protein C8F11.04.